Reading from the N-terminus, the 365-residue chain is Putative 2-dehydropantoate 2-reductase (365 aa).

The protein belongs to the ketopantoate reductase family.

It carries out the reaction (R)-pantoate + NADP(+) = 2-dehydropantoate + NADPH + H(+). Its pathway is cofactor biosynthesis; (R)-pantothenate biosynthesis; (R)-pantoate from 3-methyl-2-oxobutanoate: step 2/2. In terms of biological role, catalyzes the NADPH-dependent reduction of ketopantoate into pantoic acid. The sequence is that of Putative 2-dehydropantoate 2-reductase (KPR) from Arabidopsis thaliana (Mouse-ear cress).